Consider the following 40-residue polypeptide: Toxin CSTX-17 (40 aa).

Disulfide bonds link Cys2-Cys17, Cys9-Cys22, Cys16-Cys33, and Cys24-Cys31. Trp40 carries the tryptophan amide modification.

In terms of processing, contains 4 disulfide bonds. In terms of tissue distribution, expressed by the venom gland.

It localises to the secreted. This Cupiennius salei (American wandering spider) protein is Toxin CSTX-17.